The chain runs to 530 residues: Autoinducer-2 kinase (530 aa).

Belongs to the FGGY kinase family.

Its subcellular location is the cytoplasm. It carries out the reaction (S)-4,5-dihydroxypentane-2,3-dione + ATP = (2S)-2-hydroxy-3,4-dioxopentyl phosphate + ADP + H(+). Its function is as follows. Catalyzes the phosphorylation of autoinducer-2 (AI-2) to phospho-AI-2, which subsequently inactivates the transcriptional regulator LsrR and leads to the transcription of the lsr operon. Phosphorylates the ring-open form of (S)-4,5-dihydroxypentane-2,3-dione (DPD), which is the precursor to all AI-2 signaling molecules, at the C5 position. The chain is Autoinducer-2 kinase from Yersinia pestis bv. Antiqua (strain Antiqua).